Here is a 448-residue protein sequence, read N- to C-terminus: ATP-dependent protease ATPase subunit HslU (448 aa).

ATP is bound by residues I23, 65-70 (GIGKTE), D263, E327, and R399.

This sequence belongs to the ClpX chaperone family. HslU subfamily. In terms of assembly, a double ring-shaped homohexamer of HslV is capped on each side by a ring-shaped HslU homohexamer. The assembly of the HslU/HslV complex is dependent on binding of ATP.

It localises to the cytoplasm. ATPase subunit of a proteasome-like degradation complex; this subunit has chaperone activity. The binding of ATP and its subsequent hydrolysis by HslU are essential for unfolding of protein substrates subsequently hydrolyzed by HslV. HslU recognizes the N-terminal part of its protein substrates and unfolds these before they are guided to HslV for hydrolysis. This Borreliella burgdorferi (strain ATCC 35210 / DSM 4680 / CIP 102532 / B31) (Borrelia burgdorferi) protein is ATP-dependent protease ATPase subunit HslU.